The chain runs to 2209 residues: Genome polyprotein (2209 aa).

Glycine 2 is lipidated: N-myristoyl glycine; by host. Topologically, residues 2-1520 are cytoplasmic; it reads GAQVSSQKVG…NINRAMTILQ (1519 aa). Residues 580–600 are amphipathic alpha-helix; it reads GLGQMLESMIDNTVRETVGAA. The interval 599-619 is disordered; the sequence is AATSRDALPNTEASGPTHSKE. Active-site for protease 2A activity residues include histidine 901 and aspartate 919. The Zn(2+) site is built by cysteine 936 and cysteine 938. Cysteine 990 (for protease 2A activity) is an active-site residue. Residues cysteine 996 and histidine 998 each coordinate Zn(2+). Residues 1128–1200 form a membrane-binding region; that stretch reads GDSWLKKFTE…HQSCPSQEHQ (73 aa). Residues 1128–1266 are oligomerization; sequence GDSWLKKFTE…SPGTGKSVAT (139 aa). Residues 1149–1153 form an RNA-binding region; the sequence is SNKIS. The 157-residue stretch at 1232–1388 folds into the SF3 helicase domain; the sequence is EHTINNYIQF…NEYSRDGKLN (157 aa). 1256–1263 lines the ATP pocket; the sequence is GSPGTGKS. Zn(2+)-binding residues include cysteine 1396, cysteine 1399, cysteine 1408, and cysteine 1413. The C4-type zinc finger occupies 1396-1413; sequence CKNCHQPANFKRCCPLVC. Residues 1440–1447 are RNA-binding; it reads ERNRRSNI. The segment at 1451–1456 is oligomerization; the sequence is MEALFQ. The stretch at 1521–1536 is an intramembrane region; that stretch reads AVTTFAAVAGVVYVMY. Topologically, residues 1537 to 2209 are cytoplasmic; that stretch reads KLFAGHQGAY…TLYRRWLDSF (673 aa). The residue at position 1546 (tyrosine 1546) is an O-(5'-phospho-RNA)-tyrosine. Tyrosine 1546 is subject to O-UMP-tyrosine; transient. One can recognise a Peptidase C3 domain in the interval 1566-1744; that stretch reads GPGFDYAVAM…FAAALKRSYF (179 aa). Residues histidine 1605, glutamate 1636, and cysteine 1712 each act as for protease 3C activity in the active site. The RdRp catalytic domain occupies 1975-2090; the sequence is EKLFAFDYTG…SYPHEVDASL (116 aa). Positions 1981 and 2076 each coordinate Mg(2+).

It belongs to the picornaviruses polyprotein family. As to quaternary structure, interacts with capsid protein VP1 and capsid protein VP3 to form heterotrimeric protomers. In terms of assembly, interacts with capsid protein VP0, and capsid protein VP3 to form heterotrimeric protomers. Five protomers subsequently associate to form pentamers which serve as building blocks for the capsid. Interacts with capsid protein VP2, capsid protein VP3 and capsid protein VP4 following cleavage of capsid protein VP0. Interacts with human PVR. Interacts with capsid protein VP1 and capsid protein VP3 in the mature capsid. As to quaternary structure, interacts with capsid protein VP0 and capsid protein VP1 to form heterotrimeric protomers. Five protomers subsequently associate to form pentamers which serve as building blocks for the capsid. Interacts with capsid protein VP4 in the mature capsid. Interacts with protein 2C; this interaction may be important for virion morphogenesis. In terms of assembly, interacts with capsid protein VP1 and capsid protein VP3. Homodimer. As to quaternary structure, homohexamer; forms a hexameric ring structure with 6-fold symmetry characteristic of AAA+ ATPases. Interacts (via N-terminus) with host RTN3 (via reticulon domain); this interaction is important for viral replication. Interacts with capsid protein VP3; this interaction may be important for virion morphogenesis. In terms of assembly, interacts with protein 3CD. Homodimer. Interacts with host GBF1. Interacts (via GOLD domain) with host ACBD3 (via GOLD domain); this interaction allows the formation of a viral protein 3A/ACBD3 heterotetramer with a 2:2 stoichiometry, which will stimulate the recruitment of host PI4KB in order to synthesize PI4P at the viral RNA replication sites. As to quaternary structure, interacts with RNA-directed RNA polymerase. In terms of assembly, interacts with protein 3AB and with RNA-directed RNA polymerase. Interacts with Viral protein genome-linked and with protein 3CD. Mg(2+) is required as a cofactor. Post-translationally, specific enzymatic cleavages in vivo by the viral proteases yield processing intermediates and the mature proteins. In terms of processing, myristoylation is required for the formation of pentamers during virus assembly. Further assembly of 12 pentamers and a molecule of genomic RNA generates the provirion. During virion maturation, immature virions are rendered infectious following cleavage of VP0 into VP4 and VP2. This maturation seems to be an autocatalytic event triggered by the presence of RNA in the capsid and it is followed by a conformational change infectious virion. Post-translationally, myristoylation is required during RNA encapsidation and formation of the mature virus particle. In terms of processing, VPg is uridylylated by the polymerase into VPg-pUpU. This acts as a nucleotide-peptide primer for the genomic RNA replication.

The protein resides in the virion. Its subcellular location is the host cytoplasm. The protein localises to the host cytoplasmic vesicle membrane. It localises to the host nucleus. The enzyme catalyses RNA(n) + a ribonucleoside 5'-triphosphate = RNA(n+1) + diphosphate. It carries out the reaction Selective cleavage of Tyr-|-Gly bond in the picornavirus polyprotein.. It catalyses the reaction a ribonucleoside 5'-triphosphate + H2O = a ribonucleoside 5'-diphosphate + phosphate + H(+). The catalysed reaction is Selective cleavage of Gln-|-Gly bond in the poliovirus polyprotein. In other picornavirus reactions Glu may be substituted for Gln, and Ser or Thr for Gly.. Replication or transcription is subject to high level of random mutations by the nucleotide analog ribavirin. Functionally, forms an icosahedral capsid of pseudo T=3 symmetry with capsid proteins VP2 and VP3. The capsid is 300 Angstroms in diameter, composed of 60 copies of each capsid protein and enclosing the viral positive strand RNA genome. Capsid protein VP1 mainly forms the vertices of the capsid. Capsid protein VP1 interacts with host cell receptor PVR to provide virion attachment to target host epithelial cells. This attachment induces virion internalization predominantly through clathrin- and caveolin-independent endocytosis in Hela cells and through caveolin-mediated endocytosis in brain microvascular endothelial cells. Tyrosine kinases are probably involved in the entry process. Virus binding to PVR induces increased junctional permeability and rearrangement of junctional proteins. Modulation of endothelial tight junctions, as well as cytolytic infection of endothelial cells themselves, may result in loss of endothelial integrity which may help the virus to reach the CNS. After binding to its receptor, the capsid undergoes conformational changes. Capsid protein VP1 N-terminus (that contains an amphipathic alpha-helix) and capsid protein VP4 are externalized. Together, they shape a pore in the host membrane through which viral genome is translocated to host cell cytoplasm. Its function is as follows. Forms an icosahedral capsid of pseudo T=3 symmetry with capsid proteins VP1 and VP3. The capsid is 300 Angstroms in diameter, composed of 60 copies of each capsid protein and enclosing the viral positive strand RNA genome. In terms of biological role, forms an icosahedral capsid of pseudo T=3 symmetry with capsid proteins VP2 and VP1. The capsid is 300 Angstroms in diameter, composed of 60 copies of each capsid protein and enclosing the viral positive strand RNA genome. Lies on the inner surface of the capsid shell. After binding to the host receptor, the capsid undergoes conformational changes. Capsid protein VP4 is released, Capsid protein VP1 N-terminus is externalized, and together, they shape a pore in the host membrane through which the viral genome is translocated into the host cell cytoplasm. Functionally, component of immature procapsids, which is cleaved into capsid proteins VP4 and VP2 after maturation. Allows the capsid to remain inactive before the maturation step. Its function is as follows. Cysteine protease that cleaves viral polyprotein and specific host proteins. It is responsible for the autocatalytic cleavage between the P1 and P2 regions, which is the first cleavage occurring in the polyprotein. Also cleaves the host translation initiation factor EIF4G1, in order to shut down the capped cellular mRNA translation. Inhibits the host nucleus-cytoplasm protein and RNA trafficking by cleaving host members of the nuclear pores including NUP98, NUP62 and NUP153. Counteracts stress granule formation probably by antagonizing its assembly or promoting its dissassembly. Cleaves and inhibits host IFIH1/MDA5, thereby inhibiting the type-I IFN production and the establishment of the antiviral state. Cleaves and inhibits host MAVS, thereby inhibiting the type-I IFN production and the establishment of the antiviral state. In terms of biological role, plays an essential role in the virus replication cycle by acting as a viroporin. Creates a pore in the host endoplasmic reticulum and as a consequence releases Ca2+ in the cytoplasm of infected cell. In turn, high levels of cytoplasmic calcium may trigger membrane trafficking and transport of viral ER-associated proteins to viroplasms, sites of viral genome replication. Induces and associates with structural rearrangements of intracellular membranes. Displays RNA-binding, nucleotide binding and NTPase activities. May play a role in virion morphogenesis and viral RNA encapsidation by interacting with the capsid protein VP3. Functionally, localizes the viral replication complex to the surface of membranous vesicles. Together with protein 3CD binds the Cis-Active RNA Element (CRE) which is involved in RNA synthesis initiation. Acts as a cofactor to stimulate the activity of 3D polymerase, maybe through a nucleid acid chaperone activity. Its function is as follows. Localizes the viral replication complex to the surface of membranous vesicles. It inhibits host cell endoplasmic reticulum-to-Golgi apparatus transport and causes the disassembly of the Golgi complex, possibly through GBF1 interaction. This would result in depletion of MHC, trail receptors and IFN receptors at the host cell surface. Plays an essential role in viral RNA replication by recruiting ACBD3 and PI4KB at the viral replication sites, thereby allowing the formation of the rearranged membranous structures where viral replication takes place. In terms of biological role, acts as a primer for viral RNA replication and remains covalently bound to viral genomic RNA. VPg is uridylylated prior to priming replication into VPg-pUpU. The oriI viral genomic sequence may act as a template for this. The VPg-pUpU is then used as primer on the genomic RNA poly(A) by the RNA-dependent RNA polymerase to replicate the viral genome. During genome replication, the VPg-RNA linkage is removed by the host TDP2, thereby accelerating replication. During the late stage of the replication cycle, host TDP2 is excluded from sites of viral RNA synthesis and encapsidation, allowing for the generation of progeny virions. Involved in the viral replication complex and viral polypeptide maturation. It exhibits protease activity with a specificity and catalytic efficiency that is different from protease 3C. Protein 3CD binds to the 5'UTR of the viral genome. Functionally, major viral protease that mediates proteolytic processing of the polyprotein. Cleaves host EIF5B, contributing to host translation shutoff. Cleaves also host PABPC1, contributing to host translation shutoff. Cleaves host RIGI and thus contributes to the inhibition of type I interferon production. Cleaves host NLRP1, triggers host N-glycine-mediated degradation of the autoinhibitory NLRP1 N-terminal fragment. Inhibits the integrated stress response (ISR) in the infected cell by cleaving host G3BP1. Stress granule formation is thus inhibited, which allows protein synthesis and viral replication. Its function is as follows. Replicates the viral genomic RNA on the surface of intracellular membranes. May form linear arrays of subunits that propagate along a strong head-to-tail interaction called interface-I. Covalently attaches UMP to a tyrosine of VPg, which is used to prime RNA synthesis. The positive stranded RNA genome is first replicated at virus induced membranous vesicles, creating a dsRNA genomic replication form. This dsRNA is then used as template to synthesize positive stranded RNA genomes. ss(+)RNA genomes are either translated, replicated or encapsidated. The protein is Genome polyprotein of Homo sapiens (Human).